Here is a 453-residue protein sequence, read N- to C-terminus: MLEKAERQRKAAPDQQRSAGYMPGFGNDFETESLPGSLPQGQNSPQKCNYGLYAEQLSGSPFTAPRGTNERSWLYRIRPSVRHTGRFTKIDYPHWKTAPHTPEHSLALGQLRWSPLPAPSQSLTFLQGIRTMTTAGDALTQVGMAAHAYAFNADMVDDYFFNADGELLIVPETGAFQVFTELGRIDVEPSEICLVPRGMMFKVTRLGDEKVWRGYICENYGAKFTLPDRGPIGANCLANPRDFKTPVAAYEDKETPCRVQVKWCGSFHTAEIAHSPLDVVAWHGNYAPYKYDLKTFSPVGAILFDHPDPSIFTVLTAPSGEEGTANVDFVIFPPRWLVAEHTFRPPWYHRNIMSEFMGLIHGRYDAKEEGFVPGGMSLHNMMLAHGPDFSGFEKASNGELKPVKLDNTMAFMFETRFPQQLTTFAAELETLQDDYIDCWSGLERKFDGTPGIK.

Residues 1–12 are compositionally biased toward basic and acidic residues; sequence MLEKAERQRKAA. A disordered region spans residues 1 to 43; it reads MLEKAERQRKAAPDQQRSAGYMPGFGNDFETESLPGSLPQGQN. The active-site Proton acceptor is H306. Fe cation contacts are provided by H349 and E355. 2 residues coordinate homogentisate: Y364 and H385. H385 provides a ligand contact to Fe cation.

This sequence belongs to the homogentisate dioxygenase family. Hexamer; dimer of trimers. It depends on Fe cation as a cofactor.

It carries out the reaction homogentisate + O2 = 4-maleylacetoacetate + H(+). It functions in the pathway amino-acid degradation; L-phenylalanine degradation; acetoacetate and fumarate from L-phenylalanine: step 4/6. Its function is as follows. Involved in the catabolism of homogentisate (2,5-dihydroxyphenylacetate or 2,5-OH-PhAc), a central intermediate in the degradation of phenylalanine and tyrosine. Catalyzes the oxidative ring cleavage of the aromatic ring of homogentisate to yield maleylacetoacetate. This is Homogentisate 1,2-dioxygenase from Sinorhizobium medicae (strain WSM419) (Ensifer medicae).